The sequence spans 430 residues: 3-phosphoshikimate 1-carboxyvinyltransferase (430 aa).

Lys21, Ser22, and Arg26 together coordinate 3-phosphoshikimate. Lys21 is a phosphoenolpyruvate binding site. Phosphoenolpyruvate-binding residues include Gly94 and Arg122. Positions 168, 170, 315, and 342 each coordinate 3-phosphoshikimate. Gln170 is a binding site for phosphoenolpyruvate. The active-site Proton acceptor is Asp315. Phosphoenolpyruvate contacts are provided by Arg346 and Arg389.

Belongs to the EPSP synthase family. Monomer.

It localises to the cytoplasm. The enzyme catalyses 3-phosphoshikimate + phosphoenolpyruvate = 5-O-(1-carboxyvinyl)-3-phosphoshikimate + phosphate. It functions in the pathway metabolic intermediate biosynthesis; chorismate biosynthesis; chorismate from D-erythrose 4-phosphate and phosphoenolpyruvate: step 6/7. Its function is as follows. Catalyzes the transfer of the enolpyruvyl moiety of phosphoenolpyruvate (PEP) to the 5-hydroxyl of shikimate-3-phosphate (S3P) to produce enolpyruvyl shikimate-3-phosphate and inorganic phosphate. The protein is 3-phosphoshikimate 1-carboxyvinyltransferase of Salinibacter ruber (strain DSM 13855 / M31).